The primary structure comprises 85 residues: HssA/B-like protein 62 (85 aa).

It belongs to the hssA/B family.

This is HssA/B-like protein 62 (hssl62) from Dictyostelium discoideum (Social amoeba).